The following is a 932-amino-acid chain: Beta-mannosidase A (932 aa).

Positions 1-19 are cleaved as a signal peptide; that stretch reads MRVPAQATIAVLASAVSSP. Residues Asn-41, Asn-81, Asn-94, Asn-249, Asn-261, Asn-284, Asn-289, Asn-318, and Asn-348 are each glycosylated (N-linked (GlcNAc...) asparagine). Glu-480 functions as the Proton donor in the catalytic mechanism. 8 N-linked (GlcNAc...) asparagine glycosylation sites follow: Asn-538, Asn-551, Asn-609, Asn-624, Asn-632, Asn-659, Asn-739, and Asn-791.

It belongs to the glycosyl hydrolase 2 family. Beta-mannosidase A subfamily. In terms of assembly, homodimer.

The protein resides in the secreted. It catalyses the reaction Hydrolysis of terminal, non-reducing beta-D-mannose residues in beta-D-mannosides.. It participates in glycan metabolism; N-glycan degradation. Functionally, exoglycosidase that cleaves the single beta-linked mannose residue from the non-reducing end of beta-mannosidic oligosaccharides of various complexity and length. Involved in the degradation of polymeric mannan and galactomannan. The protein is Beta-mannosidase A (mndA) of Aspergillus terreus (strain NIH 2624 / FGSC A1156).